The primary structure comprises 479 residues: Isoprimeverose transporter (479 aa).

11 helical membrane passes run 54 to 74, 102 to 122, 131 to 151, 174 to 194, 205 to 225, 253 to 273, 289 to 309, 321 to 341, 348 to 368, 397 to 417, and 431 to 451; these read MFFY…LFLV, PYWL…FTVP, VWAY…NIPI, FMGT…VAYF, WFMV…IVFA, WPWV…QTRS, LASF…ITPW, LMGM…SKAL, VGTI…AVML, FGMG…GYVA, and MNYV…LLFY.

The protein belongs to the sodium:galactoside symporter (TC 2.A.2) family.

The protein resides in the cell membrane. Functionally, involved in the metabolism of isoprimeverose. Transports isoprimeverose into the cell. Transport is driven by the proton motive force generated by malolactic fermentation. Cannot transport D-xylose. This chain is Isoprimeverose transporter, found in Lactiplantibacillus pentosus (Lactobacillus pentosus).